We begin with the raw amino-acid sequence, 191 residues long: Protein YceI (191 aa).

Residues 1 to 22 (MKKSLLGLTFASLMFSAGSAVA) form the signal peptide.

It belongs to the UPF0312 family. Type 1 subfamily.

Its subcellular location is the periplasm. The protein is Protein YceI of Shigella boydii serotype 4 (strain Sb227).